The sequence spans 339 residues: Protein FAM50A (339 aa).

Residues 1–31 are disordered; that stretch reads MAQYKGAASEAGRAMHLMKKREKQREQMEQM. N-acetylalanine is present on A2. K100 participates in a covalent cross-link: Glycyl lysine isopeptide (Lys-Gly) (interchain with G-Cter in SUMO2). The tract at residues 150-177 is disordered; it reads TTKKKKLGKNPDVDTSFLPDRDREEEEN. The Nuclear localization signal signature appears at 152 to 155; sequence KKKK. Over residues 168 to 177 the composition is skewed to basic and acidic residues; the sequence is PDRDREEEEN.

Belongs to the FAM50 family. As to quaternary structure, interacts with EFTUD2, a component of the spliceosome U5 complex. Interacts with DDX41, a component of the spliceosome C complex. As to expression, widely expressed in embryonic and adult tissues.

The protein localises to the nucleus. In terms of biological role, probably involved in the regulation of pre-mRNA splicing. The chain is Protein FAM50A (Fam50a) from Mus musculus (Mouse).